The chain runs to 94 residues: Co-chaperonin GroES (94 aa).

It belongs to the GroES chaperonin family. Heptamer of 7 subunits arranged in a ring. Interacts with the chaperonin GroEL.

The protein resides in the cytoplasm. Its function is as follows. Together with the chaperonin GroEL, plays an essential role in assisting protein folding. The GroEL-GroES system forms a nano-cage that allows encapsulation of the non-native substrate proteins and provides a physical environment optimized to promote and accelerate protein folding. GroES binds to the apical surface of the GroEL ring, thereby capping the opening of the GroEL channel. This is Co-chaperonin GroES from Lactiplantibacillus plantarum (strain ATCC BAA-793 / NCIMB 8826 / WCFS1) (Lactobacillus plantarum).